The chain runs to 92 residues: Small ribosomal subunit protein uS19 (92 aa).

This sequence belongs to the universal ribosomal protein uS19 family.

Its function is as follows. Protein S19 forms a complex with S13 that binds strongly to the 16S ribosomal RNA. The protein is Small ribosomal subunit protein uS19 of Bacillus mycoides (strain KBAB4) (Bacillus weihenstephanensis).